We begin with the raw amino-acid sequence, 204 residues long: Outer-membrane lipoprotein carrier protein (204 aa).

The signal sequence occupies residues 1–21 (MKKLLVACCVVSGMMSASVLA).

This sequence belongs to the LolA family. In terms of assembly, monomer.

It localises to the periplasm. In terms of biological role, participates in the translocation of lipoproteins from the inner membrane to the outer membrane. Only forms a complex with a lipoprotein if the residue after the N-terminal Cys is not an aspartate (The Asp acts as a targeting signal to indicate that the lipoprotein should stay in the inner membrane). The sequence is that of Outer-membrane lipoprotein carrier protein from Edwardsiella ictaluri (strain 93-146).